The following is a 303-amino-acid chain: Elongation factor Ts (303 aa).

The segment at 81 to 84 (TDFV) is involved in Mg(2+) ion dislocation from EF-Tu.

It belongs to the EF-Ts family.

The protein localises to the cytoplasm. Its function is as follows. Associates with the EF-Tu.GDP complex and induces the exchange of GDP to GTP. It remains bound to the aminoacyl-tRNA.EF-Tu.GTP complex up to the GTP hydrolysis stage on the ribosome. This is Elongation factor Ts from Mesomycoplasma hyopneumoniae (strain 232) (Mycoplasma hyopneumoniae).